Consider the following 284-residue polypeptide: uncharacterized protein (284 aa).

The Cytoplasmic segment spans residues 1–8 (MLWKVSKM). Residues 9–25 (FLGGLVALTTISVATLY) traverse the membrane as a helical segment. At 26-80 (HYQNRLVYPSWAQGARNHVDTPDSRGIPYEKLTLITQDHIKLEAWDIKNENSTST) the chain is on the extracellular side. A helical transmembrane segment spans residues 81 to 101 (VLILCPNAGNIGYFILIIDIF). At 102 to 284 (YRQFGMSVFI…RDFLIEKGFI (183 aa)) the chain is on the cytoplasmic side.

This sequence to S.pombe bem46 and M.tuberculosis Rv2307c.

It localises to the mitochondrion membrane. This is an uncharacterized protein from Saccharomyces cerevisiae (strain ATCC 204508 / S288c) (Baker's yeast).